Here is a 631-residue protein sequence, read N- to C-terminus: Arginine--tRNA ligase (631 aa).

The 'HIGH' region motif lies at P132–H142.

It belongs to the class-I aminoacyl-tRNA synthetase family.

It localises to the cytoplasm. The enzyme catalyses tRNA(Arg) + L-arginine + ATP = L-arginyl-tRNA(Arg) + AMP + diphosphate. The protein is Arginine--tRNA ligase of Halobacterium salinarum (strain ATCC 700922 / JCM 11081 / NRC-1) (Halobacterium halobium).